The primary structure comprises 288 residues: Syntaxin-1B (288 aa).

Residues 1-13 show a composition bias toward basic and acidic residues; the sequence is MKDRTQELRSAKD. The tract at residues 1–20 is disordered; that stretch reads MKDRTQELRSAKDSDDEEEV. At 1–264 the chain is on the cytoplasmic side; sequence MKDRTQELRS…KYQSKARRKK (264 aa). Ser-10 and Ser-14 each carry phosphoserine. Residues 29-104 adopt a coiled-coil conformation; that stretch reads MDEFFEQVEE…IEQSIEQEEG (76 aa). Residues 191-253 form the t-SNARE coiled-coil homology domain; it reads LNEIETRHNE…ERAVSDTKKA (63 aa). Residues 265–288 form a helical; Anchor for type IV membrane protein membrane-spanning segment; sequence IMIIICCVVLGVVLASSIGGTLGL.

Belongs to the syntaxin family. Interacts with OTOF. Interacts with SYT6 and SYT8; the interaction is Ca(2+)-dependent. Post-translationally, phosphorylated by CK2.

It localises to the membrane. It is found in the nucleus. The protein resides in the cytoplasm. Its subcellular location is the cytoskeleton. The protein localises to the microtubule organizing center. It localises to the centrosome. It is found in the spindle. In terms of biological role, potentially involved in docking of synaptic vesicles at presynaptic active zones. May mediate Ca(2+)-regulation of exocytosis acrosomal reaction in sperm. This Homo sapiens (Human) protein is Syntaxin-1B (STX1B).